A 180-amino-acid polypeptide reads, in one-letter code: Inner membrane-spanning protein YciB (180 aa).

5 helical membrane-spanning segments follow: residues 25 to 45, 49 to 69, 76 to 96, 118 to 138, and 150 to 170; these read QNAT…CYVI, VSKL…ITLI, IKIK…MSGI, IILS…NEIV, and FKVF…LPLL.

Belongs to the YciB family.

Its subcellular location is the cell inner membrane. Plays a role in cell envelope biogenesis, maintenance of cell envelope integrity and membrane homeostasis. The chain is Inner membrane-spanning protein YciB from Rickettsia felis (strain ATCC VR-1525 / URRWXCal2) (Rickettsia azadi).